The primary structure comprises 440 residues: Putative purine permease YwdJ (440 aa).

13 helical membrane passes run 3 to 23 (LVLG…VVPV), 39 to 59 (LIQS…LKGH), 67 to 87 (PAGL…TVFA), 96 to 116 (LQGA…FKVI), 130 to 150 (VYLL…ILGI), 156 to 176 (GVDG…FIMT), 188 to 208 (ILLA…AKPI), 231 to 251 (GLII…LASM), 283 to 303 (LLSG…AGFI), 314 to 334 (FMLG…MNTF), 341 to 361 (VGFA…FAEF), 374 to 394 (SIIG…ETAL), and 399 to 419 (PVFI…AIAA).

The protein belongs to the nucleobase:cation symporter-2 (NCS2) (TC 2.A.40) family.

Its subcellular location is the cell membrane. This is Putative purine permease YwdJ (ywdJ) from Bacillus subtilis (strain 168).